Consider the following 237-residue polypeptide: Cytosolic-abundant heat soluble protein 86272 (237 aa).

The disordered stretch occupies residues 96–125 (FKDQEKYSREQAAIARAHDKDLEKKTEEYR). Positions 111–125 (RAHDKDLEKKTEEYR) are enriched in basic and acidic residues. Residues 115–193 (KDLEKKTEEY…MNALEQSKMA (79 aa)) are a coiled coil. 2 CAHS motif regions span residues 124 to 142 (YRKT…LEKQ) and 161 to 179 (QKRE…LEHE). The segment covering 204–215 (AGTTVSGGTTVS) has biased composition (low complexity). The segment at 204–237 (AGTTVSGGTTVSEHTEVHDGKEKKSLGEKIKSLF) is disordered. The segment covering 216 to 237 (EHTEVHDGKEKKSLGEKIKSLF) has biased composition (basic and acidic residues).

The protein belongs to the Cytosolic-abundant heat soluble protein (CAHS) family.

Its subcellular location is the cytoplasm. CAHS proteins are cytosolic heat soluble proteins that seem to contribute to the anhydrobiosis in tardigrades, but their specific mechanisms are yet to be identified. It is possible that protection during anhydrobiosis might occur via the stabilization of vitrifying small molecules such as sugars, but not via the direct glass transition of CAHS proteins themselves. The protein is Cytosolic-abundant heat soluble protein 86272 of Hypsibius exemplaris (Freshwater tardigrade).